The primary structure comprises 210 residues: LexA repressor (210 aa).

The H-T-H motif DNA-binding region spans Arg-31 to Lys-51. Residues Ser-126 and Lys-163 each act as for autocatalytic cleavage activity in the active site.

The protein belongs to the peptidase S24 family. Homodimer.

It catalyses the reaction Hydrolysis of Ala-|-Gly bond in repressor LexA.. Represses a number of genes involved in the response to DNA damage (SOS response), including recA and lexA. In the presence of single-stranded DNA, RecA interacts with LexA causing an autocatalytic cleavage which disrupts the DNA-binding part of LexA, leading to derepression of the SOS regulon and eventually DNA repair. The sequence is that of LexA repressor from Histophilus somni (strain 129Pt) (Haemophilus somnus).